A 404-amino-acid chain; its full sequence is S-adenosylmethionine synthase (404 aa).

An ATP-binding site is contributed by His17. Asp19 lines the Mg(2+) pocket. Position 45 (Glu45) interacts with K(+). L-methionine is bound by residues Glu58 and Gln101. Residues 101–111 form a flexible loop region; it reads QSADINRGVDR. Residues 172 to 174, 245 to 246, Asp254, 260 to 261, Ala277, and Lys281 contribute to the ATP site; these read DAK, RF, and RK. An L-methionine-binding site is contributed by Asp254. Residue Lys285 participates in L-methionine binding.

It belongs to the AdoMet synthase family. In terms of assembly, homotetramer; dimer of dimers. Mg(2+) is required as a cofactor. K(+) serves as cofactor.

The protein resides in the cytoplasm. It carries out the reaction L-methionine + ATP + H2O = S-adenosyl-L-methionine + phosphate + diphosphate. The protein operates within amino-acid biosynthesis; S-adenosyl-L-methionine biosynthesis; S-adenosyl-L-methionine from L-methionine: step 1/1. Functionally, catalyzes the formation of S-adenosylmethionine (AdoMet) from methionine and ATP. The overall synthetic reaction is composed of two sequential steps, AdoMet formation and the subsequent tripolyphosphate hydrolysis which occurs prior to release of AdoMet from the enzyme. In Chlorobium luteolum (strain DSM 273 / BCRC 81028 / 2530) (Pelodictyon luteolum), this protein is S-adenosylmethionine synthase.